We begin with the raw amino-acid sequence, 372 residues long: Fatty acid 2-hydroxylase (372 aa).

Positions A8–R86 constitute a Cytochrome b5 heme-binding domain. Residues H43 and H69 each coordinate heme. The next 2 helical transmembrane spans lie at V168–Y188 and S213–I233. The 143-residue stretch at F219 to T361 folds into the Fatty acid hydroxylase domain. Zn(2+) contacts are provided by H234, H239, H257, H260, and H261. The next 2 membrane-spanning stretches (helical) occupy residues S268–L288 and L290–L310. H315, H319, H336, H339, and H340 together coordinate Zn(2+).

It belongs to the sterol desaturase family. SCS7 subfamily. Requires Zn(2+) as cofactor. As to expression, expressed in brain (at protein level). Detected in cerebellum and forebrain. Expression in the white matter is mainly restricted in oligodendrocytes. Expressed in stomach, kidney, skin and testis. Expressed in sebaceous gland.

It localises to the endoplasmic reticulum membrane. The protein localises to the microsome membrane. The catalysed reaction is a 1,2-saturated fatty acid + 2 Fe(II)-[cytochrome b5] + O2 + 2 H(+) = a (R)-2-hydroxy fatty acid + 2 Fe(III)-[cytochrome b5] + H2O. It carries out the reaction hexadecanoate + 2 Fe(II)-[cytochrome b5] + O2 + 2 H(+) = (R)-2-hydroxyhexadecanoate + 2 Fe(III)-[cytochrome b5] + H2O. The enzyme catalyses octadecanoate + 2 Fe(II)-[cytochrome b5] + O2 + 2 H(+) = (R)-2-hydroxyoctadecanoate + 2 Fe(III)-[cytochrome b5] + H2O. It catalyses the reaction docosanoate + 2 Fe(II)-[cytochrome b5] + O2 + 2 H(+) = 2-hydroxydocosanoate + 2 Fe(III)-[cytochrome b5] + H2O. The catalysed reaction is tetracosanoate + 2 Fe(II)-[cytochrome b5] + O2 + 2 H(+) = (R)-2-hydroxytetracosanoate + 2 Fe(III)-[cytochrome b5] + H2O. The protein operates within sphingolipid metabolism; galactosylceramide biosynthesis. It participates in lipid metabolism; fatty acid metabolism. Catalyzes the hydroxylation of free fatty acids at the C-2 position to produce 2-hydroxy fatty acids, which are building blocks of sphingolipids and glycosphingolipids common in neural tissue and epidermis. FA2H is stereospecific for the production of (R)-2-hydroxy fatty acids. Plays an essential role in the synthesis of galactosphingolipids of the myelin sheath. Responsible for the synthesis of sphingolipids and glycosphingolipids involved in the formation of epidermal lamellar bodies critical for skin permeability barrier. Participates in the synthesis of glycosphingolipids and a fraction of type II wax diesters in sebaceous gland, specifically regulating hair follicle homeostasis. Involved in the synthesis of sphingolipids of plasma membrane rafts, controlling lipid raft mobility and trafficking of raft-associated proteins. The polypeptide is Fatty acid 2-hydroxylase (Mus musculus (Mouse)).